A 159-amino-acid chain; its full sequence is Transcription elongation factor GreA (159 aa).

It belongs to the GreA/GreB family.

Its function is as follows. Necessary for efficient RNA polymerase transcription elongation past template-encoded arresting sites. The arresting sites in DNA have the property of trapping a certain fraction of elongating RNA polymerases that pass through, resulting in locked ternary complexes. Cleavage of the nascent transcript by cleavage factors such as GreA or GreB allows the resumption of elongation from the new 3'terminus. GreA releases sequences of 2 to 3 nucleotides. The sequence is that of Transcription elongation factor GreA from Mycoplasmoides gallisepticum (strain R(low / passage 15 / clone 2)) (Mycoplasma gallisepticum).